A 335-amino-acid polypeptide reads, in one-letter code: Casein kinase I (335 aa).

Residues 9–278 (YRLGRKIGSG…LRRLFKDLFF (270 aa)) enclose the Protein kinase domain. ATP-binding positions include 15 to 23 (IGSGSFGDI) and K38. Residue D128 is the Proton acceptor of the active site. The tract at residues 304–335 (RSMVNQGAESGNQWRRDASGRDPLGRLPQLEP) is disordered. Residues 305-316 (SMVNQGAESGNQ) are compositionally biased toward polar residues. Over residues 317 to 327 (WRRDASGRDPL) the composition is skewed to basic and acidic residues.

The protein belongs to the protein kinase superfamily. CK1 Ser/Thr protein kinase family. Casein kinase I subfamily.

It catalyses the reaction L-seryl-[protein] + ATP = O-phospho-L-seryl-[protein] + ADP + H(+). The catalysed reaction is L-threonyl-[protein] + ATP = O-phospho-L-threonyl-[protein] + ADP + H(+). In terms of biological role, casein kinases are operationally defined by their preferential utilization of acidic proteins such as caseins as substrates. It can phosphorylate a large number of proteins. The polypeptide is Casein kinase I (Eimeria tenella (Coccidian parasite)).